The primary structure comprises 119 residues: Large ribosomal subunit protein bL19 (119 aa).

It belongs to the bacterial ribosomal protein bL19 family.

This protein is located at the 30S-50S ribosomal subunit interface and may play a role in the structure and function of the aminoacyl-tRNA binding site. The protein is Large ribosomal subunit protein bL19 of Pseudoalteromonas atlantica (strain T6c / ATCC BAA-1087).